The primary structure comprises 410 residues: Aspartic proteinase Asp1 (410 aa).

The signal sequence occupies residues 1–23 (MTARLALLASLLLLLQLVPPSSA). A propeptide spans 24–46 (VVLELHGNVYPIGHFFVTMNIGD) (removed in mature form). Residues 38–392 (FFVTMNIGDP…DSERSLLGWV (355 aa)) form the Peptidase A1 domain. Catalysis depends on residues Asp56 and Asp257.

It belongs to the peptidase A1 family. In terms of tissue distribution, expressed in pollen, nucellus, ovary wall, shoot and root meristem, coleoptiles of immature seeds, and somatic embryos.

Functionally, possesses protease activity in vitro. The chain is Aspartic proteinase Asp1 (ASP1) from Oryza sativa subsp. indica (Rice).